We begin with the raw amino-acid sequence, 434 residues long: Glutamate-1-semialdehyde 2,1-aminomutase 2 (434 aa).

Lys269 is modified (N6-(pyridoxal phosphate)lysine).

Belongs to the class-III pyridoxal-phosphate-dependent aminotransferase family. HemL subfamily. As to quaternary structure, homodimer. The cofactor is pyridoxal 5'-phosphate.

It is found in the cytoplasm. The catalysed reaction is (S)-4-amino-5-oxopentanoate = 5-aminolevulinate. The protein operates within porphyrin-containing compound metabolism; protoporphyrin-IX biosynthesis; 5-aminolevulinate from L-glutamyl-tRNA(Glu): step 2/2. This chain is Glutamate-1-semialdehyde 2,1-aminomutase 2, found in Exiguobacterium sp. (strain ATCC BAA-1283 / AT1b).